The chain runs to 165 residues: V-type proton ATPase subunit c2 (165 aa).

The Lumenal portion of the chain corresponds to 1–12 (MASTFSGDETAP). Residues 13-33 (FFGFLGAAAALVFSCMGAAYG) traverse the membrane as a helical segment. The Cytoplasmic segment spans residues 34–55 (TAKSGVGVASMGVMRPELVMKS). Residues 56–76 (IVPVVMAGVLGIYGLIIAVII) form a helical membrane-spanning segment. Over 77 to 95 (STGINPKAKSYYLFDGYAH) the chain is Lumenal. A helical transmembrane segment spans residues 96–117 (LSSGLACGLAGLSAGMAIGIVG). Residues 118 to 129 (DAGVRANAQQPK) lie on the Cytoplasmic side of the membrane. A helical transmembrane segment spans residues 130–155 (LFVGMILILIFAEALALYGLIVGIIL). Topologically, residues 156–165 (SSRAGQSRAE) are lumenal.

This sequence belongs to the V-ATPase proteolipid subunit family. As to quaternary structure, V-ATPase is a heteromultimeric enzyme composed of a peripheral catalytic V1 complex (components A to H) attached to an integral membrane V0 proton pore complex (components: a, c, c'', d and e). The proteolipid components c and c'' are present as a hexameric ring that forms the proton-conducting pore. In terms of tissue distribution, expressed in leaf, root, flower and silique, with lower expression in roots.

The protein localises to the vacuole membrane. Functionally, proton-conducting pore forming subunit of the membrane integral V0 complex of vacuolar ATPase. V-ATPase is responsible for acidifying a variety of intracellular compartments in eukaryotic cells. In Arabidopsis thaliana (Mouse-ear cress), this protein is V-type proton ATPase subunit c2 (VHA-c2).